A 370-amino-acid polypeptide reads, in one-letter code: Calcium/calmodulin-dependent protein kinase type 1 (370 aa).

The Protein kinase domain occupies 20–276; the sequence is YDFRDVLGTG…CEQALQHPWI (257 aa). Residues 26 to 34 and lysine 49 contribute to the ATP site; that span reads LGTGAFSEV. Lysine 59 is covalently cross-linked (Glycyl lysine isopeptide (Lys-Gly) (interchain with G-Cter in ubiquitin)). The active-site Proton acceptor is the aspartate 141. Threonine 177 is modified (phosphothreonine; by CaMKK1 and CaMKK2). Positions 276–316 are autoinhibitory domain; sequence IAGDTALDKNIHQSVSEQIKKNFAKSKWKQAFNATAVVRHM. The calmodulin-binding stretch occupies residues 296–317; that stretch reads KNFAKSKWKQAFNATAVVRHMR. The Nuclear export signal motif lies at 315 to 321; the sequence is HMRKLQL. Serine 363 is subject to Phosphoserine.

The protein belongs to the protein kinase superfamily. CAMK Ser/Thr protein kinase family. CaMK subfamily. Monomer. Interacts with XPO1. Interacts with MARK2, ARHGEF7/BETAPIX and GIT1. Phosphorylated by CaMKK1 and CaMKK2 on Thr-177. Post-translationally, polybiquitinated by the E3 ubiquitin-protein ligase complex SCF(FBXL12), leading to proteasomal degradation. In terms of tissue distribution, widely expressed. Expressed in cells of the zona glomerulosa of the adrenal cortex.

It localises to the cytoplasm. The protein resides in the nucleus. The catalysed reaction is L-seryl-[protein] + ATP = O-phospho-L-seryl-[protein] + ADP + H(+). It carries out the reaction L-threonyl-[protein] + ATP = O-phospho-L-threonyl-[protein] + ADP + H(+). Its activity is regulated as follows. Activated by Ca(2+)/calmodulin. Binding of calmodulin results in conformational change that relieves intrasteric autoinhibition and allows phosphorylation of Thr-177 within the activation loop by CaMKK1 or CaMKK2. Phosphorylation of Thr-177 results in several fold increase in total activity. Unlike CaMK4, is unable to exhibit autonomous activity after Ca(2+)/calmodulin activation. Its function is as follows. Calcium/calmodulin-dependent protein kinase that operates in the calcium-triggered CaMKK-CaMK1 signaling cascade and, upon calcium influx, regulates transcription activators activity, cell cycle, hormone production, cell differentiation, actin filament organization and neurite outgrowth. Recognizes the substrate consensus sequence [MVLIF]-x-R-x(2)-[ST]-x(3)-[MVLIF]. Regulates axonal extension and growth cone motility in hippocampal and cerebellar nerve cells. Upon NMDA receptor-mediated Ca(2+) elevation, promotes dendritic growth in hippocampal neurons and is essential in synapses for full long-term potentiation (LTP) and ERK2-dependent translational activation. Downstream of NMDA receptors, promotes the formation of spines and synapses in hippocampal neurons by phosphorylating ARHGEF7/BETAPIX on 'Ser-694', which results in the enhancement of ARHGEF7 activity and activation of RAC1. Promotes neuronal differentiation and neurite outgrowth by activation and phosphorylation of MARK2 on 'Ser-91', 'Ser-92', 'Ser-93' and 'Ser-294'. Promotes nuclear export of HDAC5 and binding to 14-3-3 by phosphorylation of 'Ser-259' and 'Ser-498' in the regulation of muscle cell differentiation. Regulates NUMB-mediated endocytosis by phosphorylation of NUMB on 'Ser-276' and 'Ser-295'. Involved in the regulation of basal and estrogen-stimulated migration of medulloblastoma cells through ARHGEF7/BETAPIX phosphorylation. Is required for proper activation of cyclin-D1/CDK4 complex during G1 progression in diploid fibroblasts. Plays a role in K(+) and ANG2-mediated regulation of the aldosterone synthase (CYP11B2) to produce aldosterone in the adrenal cortex. Phosphorylates EIF4G3/eIF4GII. In vitro phosphorylates CREB1, ATF1, CFTR, MYL9 and SYN1/synapsin I. The polypeptide is Calcium/calmodulin-dependent protein kinase type 1 (CAMK1) (Homo sapiens (Human)).